Consider the following 103-residue polypeptide: MYAIVKNGGKQYKVQEGDIVLFDKMSLEPKSKVELNEVLALCKDDNLILGTPFVEGAKIEIEVINEDRAKKVVTFKKRRRKDSKTKRGFRRDFTRVRILKIAA.

This sequence belongs to the bacterial ribosomal protein bL21 family. Part of the 50S ribosomal subunit. Contacts protein L20.

Its function is as follows. This protein binds to 23S rRNA in the presence of protein L20. This Wolinella succinogenes (strain ATCC 29543 / DSM 1740 / CCUG 13145 / JCM 31913 / LMG 7466 / NCTC 11488 / FDC 602W) (Vibrio succinogenes) protein is Large ribosomal subunit protein bL21.